The chain runs to 452 residues: Pup--protein ligase (452 aa).

E9 provides a ligand contact to Mg(2+). R53 contributes to the ATP binding site. Mg(2+) is bound at residue Y55. D57 serves as the catalytic Proton acceptor. Residue E63 coordinates Mg(2+). ATP-binding residues include T66 and W419.

Belongs to the Pup ligase/Pup deamidase family. Pup-conjugating enzyme subfamily.

The catalysed reaction is ATP + [prokaryotic ubiquitin-like protein]-L-glutamate + [protein]-L-lysine = ADP + phosphate + N(6)-([prokaryotic ubiquitin-like protein]-gamma-L-glutamyl)-[protein]-L-lysine.. It participates in protein degradation; proteasomal Pup-dependent pathway. It functions in the pathway protein modification; protein pupylation. Its function is as follows. Catalyzes the covalent attachment of the prokaryotic ubiquitin-like protein modifier Pup to the proteasomal substrate proteins, thereby targeting them for proteasomal degradation. This tagging system is termed pupylation. The ligation reaction involves the side-chain carboxylate of the C-terminal glutamate of Pup and the side-chain amino group of a substrate lysine. This Mycolicibacterium vanbaalenii (strain DSM 7251 / JCM 13017 / BCRC 16820 / KCTC 9966 / NRRL B-24157 / PYR-1) (Mycobacterium vanbaalenii) protein is Pup--protein ligase.